The primary structure comprises 105 residues: NADH dehydrogenase [ubiquinone] 1 beta subcomplex subunit 2, mitochondrial (105 aa).

A mitochondrion-targeting transit peptide spans 1-33; sequence MSDLTRLASFARVGGRLFRSGRARTAGDGGVRH. A disordered region spans residues 85-105; it reads PYPDPSQWTDEELGIPPDDED. Acidic residues predominate over residues 93-105; that stretch reads TDEELGIPPDDED.

The protein belongs to the complex I NDUFB2 subunit family. Complex I is composed of 45 different subunits.

Its subcellular location is the mitochondrion inner membrane. In terms of biological role, accessory subunit of the mitochondrial membrane respiratory chain NADH dehydrogenase (Complex I), that is believed not to be involved in catalysis. Complex I functions in the transfer of electrons from NADH to the respiratory chain. The immediate electron acceptor for the enzyme is believed to be ubiquinone. This is NADH dehydrogenase [ubiquinone] 1 beta subcomplex subunit 2, mitochondrial (NDUFB2) from Pan troglodytes (Chimpanzee).